The primary structure comprises 264 residues: Proteasome assembly chaperone 2 (264 aa).

Thr-137 carries the post-translational modification Phosphothreonine.

It belongs to the PSMG2 family. In terms of assembly, forms a heterodimer with PSMG1. The PSMG1-PSMG2 heterodimer interacts directly with the PSMA5 and PSMA7 proteasome alpha subunits. Post-translationally, degraded by the proteasome upon completion of 20S proteasome maturation. As to expression, widely expressed with highest levels in lung, brain and colon. Moderately expressed in muscle, stomach, spleen and heart. Weakly expressed in small intestine, pancreas and liver. Highly expressed in hepatocellular carcinomas with low levels in surrounding liver tissue.

The protein localises to the nucleus. In terms of biological role, chaperone protein which promotes assembly of the 20S proteasome as part of a heterodimer with PSMG1. The PSMG1-PSMG2 heterodimer binds to the PSMA5 and PSMA7 proteasome subunits, promotes assembly of the proteasome alpha subunits into the heteroheptameric alpha ring and prevents alpha ring dimerization. This chain is Proteasome assembly chaperone 2, found in Homo sapiens (Human).